A 110-amino-acid polypeptide reads, in one-letter code: Phosphoribosyl-AMP cyclohydrolase (110 aa).

D80 contacts Mg(2+). Residue C81 coordinates Zn(2+). Mg(2+) contacts are provided by D82 and D84. 2 residues coordinate Zn(2+): C97 and C104.

The protein belongs to the PRA-CH family. Homodimer. Mg(2+) serves as cofactor. The cofactor is Zn(2+).

It localises to the cytoplasm. It carries out the reaction 1-(5-phospho-beta-D-ribosyl)-5'-AMP + H2O = 1-(5-phospho-beta-D-ribosyl)-5-[(5-phospho-beta-D-ribosylamino)methylideneamino]imidazole-4-carboxamide. The protein operates within amino-acid biosynthesis; L-histidine biosynthesis; L-histidine from 5-phospho-alpha-D-ribose 1-diphosphate: step 3/9. Catalyzes the hydrolysis of the adenine ring of phosphoribosyl-AMP. The sequence is that of Phosphoribosyl-AMP cyclohydrolase from Clostridium botulinum (strain Kyoto / Type A2).